A 396-amino-acid polypeptide reads, in one-letter code: Elongation factor Tu (396 aa).

The tr-type G domain maps to 10 to 206 (KPHCNIGTIG…QVDAYIPQPE (197 aa)). Residues 19-26 (GHVDHGKT) are G1. 19-26 (GHVDHGKT) is a binding site for GTP. Mg(2+) is bound at residue Thr26. The G2 stretch occupies residues 60-64 (GITIS). The tract at residues 81-84 (DCPG) is G3. GTP-binding positions include 81 to 85 (DCPGH) and 136 to 139 (NKVD). Residues 136–139 (NKVD) form a G4 region. A G5 region spans residues 174-176 (SAL).

This sequence belongs to the TRAFAC class translation factor GTPase superfamily. Classic translation factor GTPase family. EF-Tu/EF-1A subfamily. Monomer.

It is found in the cytoplasm. It catalyses the reaction GTP + H2O = GDP + phosphate + H(+). GTP hydrolase that promotes the GTP-dependent binding of aminoacyl-tRNA to the A-site of ribosomes during protein biosynthesis. The polypeptide is Elongation factor Tu (Gluconobacter oxydans (strain 621H) (Gluconobacter suboxydans)).